The sequence spans 479 residues: Endosomal/lysosomal proton channel TMEM175 (479 aa).

Positions 1–26 (MSGPQAPEPTLEGQADASAGSPDEDA) are disordered. The Cytoplasmic segment spans residues 1 to 33 (MSGPQAPEPTLEGQADASAGSPDEDAAEGIQHS). Residues 34-56 (HRMLSFSDALLSIIATVMEFDKS) form a helical membrane-spanning segment. Positions 35 to 41 (RMLSFSD) match the RxxxFSD motif 1 motif. Residues 52–58 (EFDKSVQ) form a short helix H2-1 region. Residues 57-64 (VQRLLATR) are Lumenal-facing. A helical membrane pass occupies residues 65 to 87 (IAVYLMTFLIVTVAWAAHTRLFQ). The Cytoplasmic segment spans residues 88 to 93 (VVGKID). Residues 94 to 103 (DTLALLNLFS) form a helical membrane-spanning segment. Residues 104-113 (LMVTFPEVPL) lie on the Lumenal side of the membrane. A helical transmembrane segment spans residues 114-135 (GIFLFCMCVIAIGAVQALIVLY). Over 136–159 (AFHFPHLLSPQIERSAHRGLYRQR) the chain is Cytoplasmic. A helical membrane pass occupies residues 160-180 (VLGIIVRGPALCLAAAGFSLF). At 181–185 (FYPAS) the chain is on the lumenal side. Residues 186 to 205 (YLLMAMVIVLPHVSKAAGWC) traverse the membrane as a helical segment. Topologically, residues 206 to 232 (RAQLVGPREPPAHSVEVFTFDLHEPLS) are cytoplasmic. Residues 233–257 (KERVEAFSDGVYAIVATLLILDICE) traverse the membrane as a helical segment. Residues 235-241 (RVEAFSD) carry the RxxxFSD motif 2 motif. The Lumenal portion of the chain corresponds to 258–284 (DNVPDAKDVKEKFQGSLVAALGESGPH). The short helix H1-2 stretch occupies residues 263-271 (AKDVKEKFQ). The segment at 273-279 (SLVAALG) is short helix H2-2. The chain crosses the membrane as a helical span at residues 285–307 (FLAYFGSFATVGLLWFAHHSLFL). The Cytoplasmic segment spans residues 308–313 (HIRRAT). Residues 314–335 (QPMGLLNTLSLAFVGGLPLAYQ) traverse the membrane as a helical segment. At 336 to 350 (QTSAFTKQPRDELES) the chain is on the lumenal side. The chain crosses the membrane as a helical span at residues 351-371 (VRISCAIIFLASIFQFAIWTT). The Cytoplasmic portion of the chain corresponds to 372-391 (ALLQEGETLQPSARFGGREH). The helical transmembrane segment at 392–415 (AFMFAKLALYPCASLLAFACTCVL) threads the bilayer. Over 416–417 (SS) the chain is Lumenal. Residues 418–444 (FSTAIFHAMQIAVPFAFLLLRLLVRLA) traverse the membrane as a helical segment. The Cytoplasmic portion of the chain corresponds to 445 to 479 (LAGLRALRGLVGPVLARPAPGAADEAQSPLLPAPC).

It belongs to the TMEM175 family. In terms of assembly, homodimer. Interacts with AKT (AKT1, AKT2 or AKT3); leading to formation of the lysoK(GF) complex, which activates the channel. Interacts with LAMP1; inhibiting the proton channel activity of TMEM175. Interacts with LAMP2; inhibiting the proton channel activity of TMEM175.

Its subcellular location is the endosome membrane. The protein localises to the lysosome membrane. It catalyses the reaction H(+)(in) = H(+)(out). The enzyme catalyses K(+)(in) = K(+)(out). Its activity is regulated as follows. Active at low pH (under pH 4.6): proton channel activity is activated by luminal side protons. Polyunsaturated fatty acids, such as arachidonic acid, also activate the channel activity. Proton channel activity is directly inhibited by LAMP1 or LAMP2, facilitating lysosomal acidification. Channel activity is activated following interaction with AKT (AKT1, AKT2 or AKT3): interaction promotes activation from closed to an open state. Activation by AKT is independent of AKT serine/threonine-protein kinase activity. Its function is as follows. Proton-activated proton channel that catalyzes proton efflux from endosomes and lysosomes to maintain a steady-state pH. Activated at low pH (under pH 4.6) by luminal side protons: selectively mediates lysosomal proton release from lysosomes, eliciting a proton leak that balances V-ATPase activity to maintain pH homeostasis. Regulation of lumenal pH stability is required for autophagosome-lysosome fusion. Also acts as a potassium channel at higher pH, regulating potassium conductance in endosomes and lysosomes. Constitutes the pore-forming subunit of the lysoK(GF) complex, a complex activated by extracellular growth factors. The lysoK(GF) complex is composed of TMEM175 and AKT (AKT1, AKT2 or AKT3), a major target of growth factor receptors: in the complex, TMEM175 channel is opened by conformational changes by AKT, leading to its activation. The lysoK(GF) complex is required to protect neurons against stress-induced damage. The protein is Endosomal/lysosomal proton channel TMEM175 of Bos taurus (Bovine).